A 156-amino-acid chain; its full sequence is SPbeta prophage-derived uncharacterized protein YosH (156 aa).

The protein is SPbeta prophage-derived uncharacterized protein YosH (yosH) of Bacillus subtilis (strain 168).